Reading from the N-terminus, the 378-residue chain is UPF0754 membrane protein BcerKBAB4_0766 (378 aa).

The next 2 membrane-spanning stretches (helical) occupy residues 1–21 (MNIW…GGYT) and 357–377 (YLGA…LLFL).

Belongs to the UPF0754 family.

The protein resides in the cell membrane. This chain is UPF0754 membrane protein BcerKBAB4_0766, found in Bacillus mycoides (strain KBAB4) (Bacillus weihenstephanensis).